The following is an 843-amino-acid chain: Urease (843 aa).

The region spanning 400-843 (GGIDCHVHFI…VPLSRNYFLF (444 aa)) is the Urease domain. Ni(2+) contacts are provided by histidine 405, histidine 407, and lysine 488. At lysine 488 the chain carries N6-carboxylysine. Residue histidine 490 participates in substrate binding. Histidine 517 and histidine 543 together coordinate Ni(2+). Histidine 591 (proton donor) is an active-site residue. Ni(2+) is bound at residue aspartate 631.

In the C-terminal section; belongs to the metallo-dependent hydrolases superfamily. Urease alpha subunit family. Homohexamer. Other oligomeric forms may exist depending on pH and presence of salts. The cofactor is Ni(2+). In terms of processing, carboxylation allows a single lysine to coordinate two nickel ions.

It carries out the reaction urea + 2 H2O + H(+) = hydrogencarbonate + 2 NH4(+). It participates in nitrogen metabolism; urea degradation; CO(2) and NH(3) from urea (urease route): step 1/1. Its function is as follows. Urea hydrolase involved in nitrogen recycling from ureide, purine, and arginine catabolism. The sequence is that of Urease from Oryza sativa subsp. indica (Rice).